The chain runs to 284 residues: 4-diphosphocytidyl-2-C-methyl-D-erythritol kinase (284 aa).

K10 is an active-site residue. Residue 92–102 (PYGAGLGSGSS) participates in ATP binding. The active site involves D134.

The protein belongs to the GHMP kinase family. IspE subfamily.

The enzyme catalyses 4-CDP-2-C-methyl-D-erythritol + ATP = 4-CDP-2-C-methyl-D-erythritol 2-phosphate + ADP + H(+). Its pathway is isoprenoid biosynthesis; isopentenyl diphosphate biosynthesis via DXP pathway; isopentenyl diphosphate from 1-deoxy-D-xylulose 5-phosphate: step 3/6. Catalyzes the phosphorylation of the position 2 hydroxy group of 4-diphosphocytidyl-2C-methyl-D-erythritol. The chain is 4-diphosphocytidyl-2-C-methyl-D-erythritol kinase from Salinibacter ruber (strain DSM 13855 / M31).